The sequence spans 491 residues: Conidiogenone synthase PchP450 (491 aa).

A helical membrane pass occupies residues 2 to 22 (LLLWFGFFSFVCGLVIYRLQF). A heme-binding site is contributed by C430.

This sequence belongs to the cytochrome P450 family. The cofactor is heme.

It is found in the membrane. The protein operates within secondary metabolite biosynthesis; terpenoid biosynthesis. Functionally, cytochrome P450 monooxygenase; part of the gene cluster that mediates the biosynthesis of conidiogenone, a diterpene known to induce the conidiation. The bifunctional terpene synthase PrDS converts isopentenyl diphosphate (IPP) and dimethylallyl diphosphate (DMAPP) into deoxyconidiogenol. The C-terminal prenyltransferase (PT) domain of PrDS catalyzes formation of GGPP, whereas the N-terminal terpene cyclase (TC) domain catalyzes the cyclization of GGPP into deoxyconidiogenol. The cytochrome P450 monooxygenase PrP450 then catalyzes two rounds of oxidation to furnish conidiogenone. This Penicillium rubens (strain ATCC 28089 / DSM 1075 / NRRL 1951 / Wisconsin 54-1255) (Penicillium chrysogenum) protein is Conidiogenone synthase PchP450.